Here is a 154-residue protein sequence, read N- to C-terminus: Lipoprotein signal peptidase (154 aa).

A run of 2 helical transmembrane segments spans residues 55-75 (GHMW…IYIM) and 84-104 (LFSI…IDRV). Residues aspartate 111 and aspartate 129 contribute to the active site. A helical membrane pass occupies residues 124–144 (IFNVADASLSVGVVLMLVYVF).

It belongs to the peptidase A8 family.

The protein resides in the cell membrane. It catalyses the reaction Release of signal peptides from bacterial membrane prolipoproteins. Hydrolyzes -Xaa-Yaa-Zaa-|-(S,diacylglyceryl)Cys-, in which Xaa is hydrophobic (preferably Leu), and Yaa (Ala or Ser) and Zaa (Gly or Ala) have small, neutral side chains.. It participates in protein modification; lipoprotein biosynthesis (signal peptide cleavage). Its function is as follows. This protein specifically catalyzes the removal of signal peptides from prolipoproteins. The protein is Lipoprotein signal peptidase of Listeria welshimeri serovar 6b (strain ATCC 35897 / DSM 20650 / CCUG 15529 / CIP 8149 / NCTC 11857 / SLCC 5334 / V8).